The primary structure comprises 356 residues: Histidinol-phosphate aminotransferase (356 aa).

At Lys214 the chain carries N6-(pyridoxal phosphate)lysine.

The protein belongs to the class-II pyridoxal-phosphate-dependent aminotransferase family. Histidinol-phosphate aminotransferase subfamily. In terms of assembly, homodimer. Pyridoxal 5'-phosphate is required as a cofactor.

The catalysed reaction is L-histidinol phosphate + 2-oxoglutarate = 3-(imidazol-4-yl)-2-oxopropyl phosphate + L-glutamate. Its pathway is amino-acid biosynthesis; L-histidine biosynthesis; L-histidine from 5-phospho-alpha-D-ribose 1-diphosphate: step 7/9. In Escherichia coli O6:K15:H31 (strain 536 / UPEC), this protein is Histidinol-phosphate aminotransferase.